Reading from the N-terminus, the 560-residue chain is Membrane protein insertase YidC (560 aa).

A run of 6 helical transmembrane segments spans residues 5 to 25 (IINL…WQYF), 334 to 354 (AIDF…MNFF), 357 to 377 (YVGN…LLMF), 431 to 451 (LPIL…YVTI), 476 to 496 (LFGL…WPIL), and 522 to 542 (FMPL…LIYW).

This sequence belongs to the OXA1/ALB3/YidC family. Type 1 subfamily. As to quaternary structure, interacts with the Sec translocase complex via SecD. Specifically interacts with transmembrane segments of nascent integral membrane proteins during membrane integration.

The protein localises to the cell inner membrane. Functionally, required for the insertion and/or proper folding and/or complex formation of integral membrane proteins into the membrane. Involved in integration of membrane proteins that insert both dependently and independently of the Sec translocase complex, as well as at least some lipoproteins. Aids folding of multispanning membrane proteins. The chain is Membrane protein insertase YidC from Rickettsia massiliae (strain Mtu5).